The sequence spans 580 residues: MHLSAVFNALLVSVLAAVLWKHVRLREHAATLEEELALSRQATEPAPALRIDYPKALQILMEGGTHMVCTGRTHTDRICRFKWLCYSNEAEEFIFFHGNTSVMLPNLGSRRFQPALLDLSTVEDHNTQYFNFVELPAAALRFMPKPVFVPDVALIANRFNPDNLMHVFHDDLLPLFYTLRQFPGLAHEARLFFMEGWGEGAHFDLYKLLSPKQPLLRAQLKTLGRLLCFSHAFVGLSKITTWYQYGFVQPQGPKANILVSGNEIRQFARFMTEKLNVSHTGVPLGEEYILVFSRTQNRLILNEAELLLALAQEFQMKTVTVSLEDHTFADVVRLVSNASMLVSMHGAQLVTTLFLPRGATVVELFPYAVNPDHYTPYKTLAMLPGMDLQYVAWRNMMPENTVTHPERPWDQGGITHLDRAEQARILQSREVPRHLCCRNPEWLFRIYQDTKVDIPSLIQTIRRVVKGRPGPRKQKWTVGLYPGKVREARCQASVHGASEARLTVSWQIPWNLKYLKVREVKYEVWLQEQGENTYVPYILALQNHTFTENIKPFTTYLVWVRCIFNKILLGPFADVLVCNT.

The Cytoplasmic portion of the chain corresponds to 1–4; sequence MHLS. Residues 5-25 form a helical; Signal-anchor for type II membrane protein membrane-spanning segment; sequence AVFNALLVSVLAAVLWKHVRL. Topologically, residues 26-580 are lumenal; sequence REHAATLEEE…PFADVLVCNT (555 aa). N-linked (GlcNAc...) asparagine glycans are attached at residues Asn-99 and Asn-276. Positions 488–580 constitute a Fibronectin type-III domain; it reads ARCQASVHGA…PFADVLVCNT (93 aa).

This sequence belongs to the glycosyltransferase 61 family. As to expression, highly expressed in the brain, muscle, heart, and kidney in both fetus and adult. In the brain, highest expression in the cortex and cerebellum. Highly expressed in the pancreas.

It is found in the endoplasmic reticulum membrane. The catalysed reaction is 3-O-(alpha-D-mannosyl)-L-threonyl-[protein] + UDP-N-acetyl-alpha-D-glucosamine = 3-O-(N-acetyl-beta-D-glucosaminyl-(1-&gt;4)-alpha-D-mannosyl)-L-threonyl-[protein] + UDP + H(+). Its pathway is protein modification; protein glycosylation. O-linked mannose beta-1,4-N-acetylglucosaminyltransferase that transfers UDP-N-acetyl-D-glucosamine to the 4-position of the mannose to generate N-acetyl-D-glucosamine-beta-1,4-O-D-mannosylprotein. Involved in the biosynthesis of the phosphorylated O-mannosyl trisaccharide (N-acetylgalactosamine-beta-3-N-acetylglucosamine-beta-4-(phosphate-6-)mannose), a carbohydrate structure present in alpha-dystroglycan (DAG1), which is required for binding laminin G-like domain-containing extracellular proteins with high affinity. The polypeptide is Protein O-linked-mannose beta-1,4-N-acetylglucosaminyltransferase 2 (POMGNT2) (Homo sapiens (Human)).